The primary structure comprises 148 residues: Cytochrome c6, chloroplastic (148 aa).

A chloroplast-targeting transit peptide spans 1–58; the sequence is MLQLANRSVRAKAARASQSARSVSCAAAKRGADVAPLTSALAVTASILLTTGAASASA. Cysteine 72, cysteine 75, histidine 76, and methionine 118 together coordinate heme c.

It belongs to the cytochrome c family. PetJ subfamily. As to quaternary structure, thought to function as a monomer, however 2 crystal forms are observed; a homodimer and homotrimer, suggesting the protein oligomerizes. Post-translationally, binds 1 heme c group covalently per subunit.

The protein resides in the plastid. The protein localises to the chloroplast thylakoid lumen. In terms of biological role, functions as an electron carrier between membrane-bound cytochrome b6-f and photosystem I in oxygenic photosynthesis. This Chlamydomonas reinhardtii (Chlamydomonas smithii) protein is Cytochrome c6, chloroplastic (petJ).